A 169-amino-acid polypeptide reads, in one-letter code: Large ribosomal subunit protein uL15 (169 aa).

Residues 20-56 (GRGIGSGKGKTGGRGVKGQKARSGVSIKGFEGGQMPL) are disordered. A compositionally biased stretch (gly residues) spans 21–35 (RGIGSGKGKTGGRGV).

The protein belongs to the universal ribosomal protein uL15 family. In terms of assembly, part of the 50S ribosomal subunit.

Binds to the 23S rRNA. This Methylorubrum extorquens (strain CM4 / NCIMB 13688) (Methylobacterium extorquens) protein is Large ribosomal subunit protein uL15.